The chain runs to 235 residues: Small ribosomal subunit protein uS2c (235 aa).

The protein belongs to the universal ribosomal protein uS2 family.

The protein localises to the plastid. This is Small ribosomal subunit protein uS2c (rps2) from Euglena longa (Euglenophycean alga).